The sequence spans 436 residues: Prenyltransferase nscD (436 aa).

It belongs to the tryptophan dimethylallyltransferase family.

Its pathway is secondary metabolite biosynthesis. Prenyltransferase; part of the gene cluster that mediates the biosynthesis of neosartoricin B, a prenylated anthracenone that probably exhibits T-cell antiproliferative activity, suggestive of a physiological role as an immunosuppressive agent. The non-reducing polyketide synthase nscA probably synthesizes and cyclizes the decaketide backbone. The hydrolase nscB then mediates the product release through hydrolysis followed by spontaneous decarboxylation. The prenyltransferase nscD catalyzes the addition of the dimethylallyl group to the aromatic C5. The FAD-dependent monooxygenase nscC is then responsible for the stereospecific hydroxylation at C2. Neosartoricin B can be converted into two additional compounds neosartoricins C and D. Neosartoricin C is a spirocyclic compound that is cyclized through the attack of C3 hydroxyl on C14, followed by dehydration. On the other hand, neosartoricin D is a further cyclized compound in which attack of C2 on C14 in neosartoricin C results in the formation of the acetal-containing dioxabicyclo-octanone ring. Both of these compounds are novel and possibly represent related metabolites of the gene cluster. This Trichophyton equinum (strain ATCC MYA-4606 / CBS 127.97) (Horse ringworm fungus) protein is Prenyltransferase nscD.